Reading from the N-terminus, the 249-residue chain is tRNA pseudouridine synthase A (249 aa).

Asp-53 (nucleophile) is an active-site residue. Substrate is bound at residue Tyr-111.

The protein belongs to the tRNA pseudouridine synthase TruA family. In terms of assembly, homodimer.

The enzyme catalyses uridine(38/39/40) in tRNA = pseudouridine(38/39/40) in tRNA. Formation of pseudouridine at positions 38, 39 and 40 in the anticodon stem and loop of transfer RNAs. This is tRNA pseudouridine synthase A from Streptococcus suis (strain 05ZYH33).